A 104-amino-acid chain; its full sequence is Large ribosomal subunit protein uL24 (104 aa).

The protein belongs to the universal ribosomal protein uL24 family. Part of the 50S ribosomal subunit.

Its function is as follows. One of two assembly initiator proteins, it binds directly to the 5'-end of the 23S rRNA, where it nucleates assembly of the 50S subunit. Functionally, one of the proteins that surrounds the polypeptide exit tunnel on the outside of the subunit. This is Large ribosomal subunit protein uL24 from Corynebacterium kroppenstedtii (strain DSM 44385 / JCM 11950 / CIP 105744 / CCUG 35717).